A 271-amino-acid chain; its full sequence is Phosphonates import ATP-binding protein PhnC 2 (271 aa).

One can recognise an ABC transporter domain in the interval 2–245 (LVVEGLTCRF…IARELYDLEA (244 aa)). Residue 34–41 (GRSGAGKS) coordinates ATP.

Belongs to the ABC transporter superfamily. Phosphonates importer (TC 3.A.1.9.1) family. As to quaternary structure, the complex is composed of two ATP-binding proteins (PhnC), two transmembrane proteins (PhnE) and a solute-binding protein (PhnD).

It localises to the cell inner membrane. The catalysed reaction is phosphonate(out) + ATP + H2O = phosphonate(in) + ADP + phosphate + H(+). Its function is as follows. Part of the ABC transporter complex PhnCDE involved in phosphonates import. Responsible for energy coupling to the transport system. The chain is Phosphonates import ATP-binding protein PhnC 2 from Rhodopseudomonas palustris (strain BisB18).